Consider the following 384-residue polypeptide: tRNA(Met) cytidine acetate ligase (384 aa).

ATP contacts are provided by residues 7 to 20, Gly-101, Asn-153, and Arg-178; that span reads VAEYNPFHSGHEFL.

It belongs to the TmcAL family.

It is found in the cytoplasm. It carries out the reaction cytidine(34) in elongator tRNA(Met) + acetate + ATP = N(4)-acetylcytidine(34) in elongator tRNA(Met) + AMP + diphosphate. Catalyzes the formation of N(4)-acetylcytidine (ac(4)C) at the wobble position of elongator tRNA(Met), using acetate and ATP as substrates. First activates an acetate ion to form acetyladenylate (Ac-AMP) and then transfers the acetyl group to tRNA to form ac(4)C34. This Lactobacillus delbrueckii subsp. bulgaricus (strain ATCC BAA-365 / Lb-18) protein is tRNA(Met) cytidine acetate ligase.